Reading from the N-terminus, the 68-residue chain is U-poneritoxin(01)-Om4a (68 aa).

Positions 1–25 are cleaved as a signal peptide; it reads MKPSSLTLAFLVVFMMAIMYNSVQA. Positions 26-39 are excised as a propeptide; that stretch reads EALADADAEAFAEA.

Belongs to the formicidae venom precursor-01 superfamily. Homo- or heterodimer with PLP7 (AC A0A348G6I9); disulfide-linked. Post-translationally, truncated sequences of this peptide have also been found in the venom. It is possible they have been cleaved in the venom. In terms of tissue distribution, expressed by the venom gland.

The protein resides in the secreted. Its function is as follows. This homodimer composed of two cationic amphipathic alpha-helical peptides has antimicrobial activities against E.coli (MIC=3.1 uM), S.aureus (MIC=3.1 uM), and S.cerevisiae (MIC=3.1 uM). It also shows histamine-releasing activity (66.4% at 10 uM) and a weak hemolytic activity (10.5% at 50 uM). The chain is U-poneritoxin(01)-Om4a from Odontomachus monticola (Trap-jaw ant).